The chain runs to 107 residues: Integration host factor (107 aa).

A disordered region spans residues 1–20 (MALPPLTPEQRAAALEKAAA). Over residues 9–18 (EQRAAALEKA) the composition is skewed to low complexity. Lys-54 provides a ligand contact to DNA. The H2TH motif, binds DNA signature appears at 64 to 71 (LPGVGKVR). The DNA site is built by Ser-82, Arg-85, Arg-88, Ser-92, Asn-93, and Gln-94. A lid, binds DNA region spans residues 82–94 (SESRRVRGLGSNQ).

The protein belongs to the actinobacterial IHF (aIHF) family. As to quaternary structure, monomer.

It is found in the cytoplasm. It localises to the spore. The protein localises to the nucleoid. A nucleoid-associated protein (NAP) that probably plays a role in chromosome compactation. Contributes to development and secondary metabolism, but is dispensable for growth and viability. Binds to the promoter region of a number of genes (including itself); multiple molecules of the protein bind to the DNA simultaneously, deletion alters the expression of about 30 genes (both up- and down-regulation occurs). Plays a role in controlling viability. Binds dsDNA without any obvious sequence specificity, in a concentration and length-dependent manner. Promotes supercoiling in a topoisomerase-dependent manner (counteracts TopA plasmid relaxation). Binds DNA as a monomer, contacting 8 base pairs via the phosphate backbone; each monomer can bind 2 DNA duplexes, allowing a bridging function. Alters DNA topology, constraining negative supercoils, possibly by DNA twist. Longer dsDNA binds more than one sIHF subunit. This chain is Integration host factor, found in Streptomyces coelicolor (strain ATCC BAA-471 / A3(2) / M145).